A 599-amino-acid chain; its full sequence is DNA primase (599 aa).

The segment at 38 to 62 (CPFHQEKTPSFTVSDSKRFFYCFGC) adopts a CHC2-type zinc-finger fold. Residues 250 to 332 (NYSILVEGYF…EKKISFIRLP (83 aa)) enclose the Toprim domain. Mg(2+)-binding residues include Glu-256, Asp-300, and Asp-302.

This sequence belongs to the DnaG primase family. As to quaternary structure, monomer. Interacts with DnaB. The cofactor is Zn(2+). It depends on Mg(2+) as a cofactor.

It catalyses the reaction ssDNA + n NTP = ssDNA/pppN(pN)n-1 hybrid + (n-1) diphosphate.. RNA polymerase that catalyzes the synthesis of short RNA molecules used as primers for DNA polymerase during DNA replication. In Rickettsia bellii (strain RML369-C), this protein is DNA primase.